We begin with the raw amino-acid sequence, 721 residues long: Centlein (721 aa).

A coiled-coil region spans residues 52 to 164 (KNEKAISEQT…LRDENEEVVN (113 aa)). Disordered stretches follow at residues 156-180 (RDENEEVVNPEEKEHCPTDKAKSEM) and 259-288 (ETSQNIRPIENDGNQKETDQTEDSRAQQEV). Composition is skewed to basic and acidic residues over residues 165-178 (PEEKEHCPTDKAKS) and 267-284 (IENDGNQKETDQTEDSRA). Coiled coils occupy residues 345–515 (LLRE…EDLK) and 573–626 (QSEQ…TQKS). A Phosphothreonine modification is found at threonine 658.

As to quaternary structure, interacts with CEP250 and CEP68. Interacts with NEK2; the interaction leads to phosphorylation of CNTLN. Post-translationally, phosphorylated directly or indirectly by NEK2.

It localises to the cytoplasm. The protein localises to the cytoskeleton. It is found in the microtubule organizing center. Its subcellular location is the centrosome. The protein resides in the centriole. Functionally, required for centrosome cohesion and recruitment of CEP68 to centrosomes. The polypeptide is Centlein (Rattus norvegicus (Rat)).